The primary structure comprises 480 residues: Acyl-lipid (8-3)-desaturase (480 aa).

Residues 1 to 30 are disordered; sequence MAPHSADTAGLVPSDELRLRTSNSKGPEQE. Residues 33–107 enclose the Cytochrome b5 heme-binding domain; sequence LKKYTLEDVS…LAKYCIGELV (75 aa). Residues His68 and His90 each contribute to the heme site. 2 helical membrane-spanning segments follow: residues 151-171 and 173-193; these read IHPH…ASYY and AFFW…MGFF. A Histidine box-1 motif is present at residues 203–207; that stretch reads HDGNH. A Histidine box-2 motif is present at residues 238–243; that stretch reads HVVGHH. 3 helical membrane-spanning segments follow: residues 280 to 300, 322 to 342, and 348 to 368; these read IYLA…DDFL, IFFQ…SVYG, and TFLA…AFLF. Residues 419–423 carry the Histidine box-3 motif; the sequence is QIEHH.

It belongs to the fatty acid desaturase type 1 family. Fe(2+) serves as cofactor.

Its subcellular location is the membrane. It carries out the reaction an (8Z,11Z,14Z)-icosatrienoyl-containing glycerolipid + 2 Fe(II)-[cytochrome b5] + O2 + 2 H(+) = (5Z,8Z,11Z,14Z)-eicosatetraenoyl-containing glycerolipid + 2 Fe(III)-[cytochrome b5] + 2 H2O. The catalysed reaction is an (8Z,11Z,14Z,17Z)-eicosatetraenoyl-containing glycerolipid + 2 Fe(II)-[cytochrome b5] + O2 + 2 H(+) = a (5Z,8Z,11Z,14Z,17Z)-eicosapentaenoyl-containing glycerolipid + 2 Fe(III)-[cytochrome b5] + 2 H2O. Fatty acid desaturase that introduces a cis double bond at the 5-position in 20-carbon polyunsaturated fatty acids incorporated in a glycerolipid that contain a Delta(8) double bond. The sequence is that of Acyl-lipid (8-3)-desaturase from Physcomitrium patens (Spreading-leaved earth moss).